A 5233-amino-acid polypeptide reads, in one-letter code: MVGLLNPLKYGDHFYELYTNSTRRKMQHDRKVLTKRKSRKDKSAAAMAAAAAAAVLEGNAGAGGLVNPLDPPLVKEQLMILPSFPVAHIELDPNASKFAVFSAIRSTVLEAETRYSLFQEGGAPSGQSGSNQKKWSNNVNSACCMMCAHSCMISNLLDCSCHAHMAMHGAVGPGNAGPGGPVGVLVDGRIPAPVPVVVGGPGLPAEKRPRRDSANSDADSDTEEPTEREPVYATVPLIVGAGLRSLFELIADARHVHPLLCTKALKALLDVIQGQQPESFKLEPEELINPLYDLLLDLATMPAALNSATGAEANWSAMACAALLGLCIARGDTGKMLKAIAAMLMTPRQLSAQIVQLPVVLATLQHTVISAALNKPTRPDFHSHGVPHNSLIDEFPVKLPPLSTGAPITSPAMACDGVFVYLLYGGTLLKIGTGFGGSYKGHIYAQNEDFSHERSAWLGYSGGQLYFRRTCRRSAGDQLQMVGLDTLAIKAMSPLSMLHMREGLNYVLFTDDDSLHAICSNRDDTLVVKKLNLYHNSYNIDPPPFELPLQLARKKFRTLGYAAFEDELLNQYQIQRIQSAHNSFEPKLPAPCRDADVDVMGMACGKEFGLVRASNGRVYYYGKSAALGLKCVGRTPTLKLTELVISKAANIVHVAVGHDGIHALLVNDDGTVFFAGTARRGEDGDSSKNRRQPKAVKPKKMTKIDGHVVVHAACNNGTSAFVTKTGKLIMYGKDTAHCDAMGFVSELLEQHVTKVALGKAHCVALNAKGQLFSFGLNNKGQCGRIFNKLQPVKDVPPFASSSTAAACFASLLPLDKRLKLDFSTLCDYDDHNLVQGQCRVCVICRECTGYNVSCVSALNVPLDQRLAGSICPCGHGDAGCAKCGLCAACIALQDSDEAKTELKPPPSDVQQRQQRSKTLIMRRKERKGELETGAAGGGAATPTDLDKDPPRVAPLAPQLLQLTSSSPVVQVACGLHHTVVLTLAGEVYTFGSNQYGQLGSGDLQPVSGPVRVQVPGAISQVAAGSNHTVLLTSKGMVYTFGNYQKGQLGRLPSDYGLKPPPQDDDSPVGAGSDGGAGGSPTVAPVGMPGPERSQSPANVQPSGSKEMPPLLPVLTQRQKFLWNCSPGAVFGLGPCYGKKVTWIGANGDQTFIKIDESLITAQMLPKMHVVANKKTILLIPSIPLSFHTLSINRRDGSCTAHYRGQTNFVKLMQAQPEQQQPEINSNLDVAVTPVADSPAHASTSSLLAALTGTATAGVPINEQMSRSMHEARNQIFEEQLPEVGSSAAAAAVAAPGTPVSAGSVPRSRRGGKQGTSSPEPIPSPPQLAFTMDPTYNVLWVFDGAARKLRCHNVVASDINDSDANAATYRSLLSPELSLPDRVDSRVARSQASLNLLACLDILTSAQDNIPGCFEQPLLKQTQQTAETQAGEFQVVNRFDNFGGGWGYSGHSVEAIRFSADTDIVICGFGMFGGRGEYSCKLKLFDLGGDGGGYEKEGILISETKEVPYECGARSKHHILLPKPVSAVAGRWYLVWARIAGPSSDCGSCGQASVTTEDQVVFSFKSSKKANNGTDVNSGQIPAILYRLVTQDCKQTPAQMDADPVQRISRAFANSVSRECFESLVVLLSWSWDCFKLQLREERDRSRPLQLQQSLQYLGYVIKSCLRLLRKYTIEIYPQRNSSTSVATGGGSNAAHGSGVVTTAKSVQSKPNKDKNTPRVVGNAGVMAKYFGDPSTSVAPAMISSASSGGAPSTSASAAVAPGSGTPVTRKTNMENIQLAECIGNVRALLIGIFCDDIFKDIATDEGYELSLEILDECHLSFVACFDAFYPTSSLKWNCLCDLLAQMDRGALHSRLLSAILAGLCSPSVKLRATFSLLSAAGNERQSIISPSDNSGLPMLSSTDAHPYPVLVEQMIYRTQQEKSDFLSNSWTFKDVLVRLLDIIASPIRSRIEAIYSRSLGSLGYPGGKDCVNQGLIDNCCHLLARVLAEIVYQTAMGEYDKLFMPPRTLHSTGARFARCDVSRTWNTGNFGPDAIAFAVDRPGVAIAGAMVYSGSGSYDYQLELLYDNTADLQPQHKWETLESVSGSYDQDAVHNDLAEIKFDHPVHIKENARYALRLCSQGARTCSGDAGMPAVRGPCGAQFHFYACDLSFNGTTPARGQLPCILYYSTPMKQDGHSASGRTGDGSNVATHLEDRIMLLGPHEVSTRDTALQIAADITKKCTELLILARNAMAASCSPSDNSSNHTQTIDSEHNITPIEEHMDINWANNSRTAALPTAIDPQLSTARDLGKRIESFSKGLMETLKFDKRSTNPFEMEIEIGATEVEESADLRNGQSQSVSQSQSQSQSVPINGNERTADFEFAEQSAQQSMPQHLHSDSEEAPLEVAGMAAGGGVSVADGSGGVAGVGSQAAAVQLLEVFNLAASNMFHTLLPLVYAHIANLACSDPKSSVQILGLIKEILPHIAALNQLHVSKDQRQPEPAIFATQTSGSGNSNSSSTTSNHYCVVESDHPYKSASISSYRVEFPPCVQWLTIEFDPQCGTAQLEDYLLLSIPMRPASQAPPVPHVDDYLEQADNNVNGAGDRRRNTGGGIAGSGAAPNTHQRSASVQLTMASCCRSPGCGNAPGSAAAPSSMPLRSQDPNDREWIVVKKFNTASTWLHNVLILPGNCVEFSLETASLYAQDPHNNRYGFKCLVVGYDNPTSINASNSCLIRLEQELAYLGGMCSANLMKKELNLPDDKDVEDMSGIEETINTHHTLLSKGFALSEPQLTVHQALESYLPIGSQSNERQFLKDFISGAPGSSGARLAAWLQPESRLDPNKCELNTITEPLRYGWPSQVTVTIRDQYGDAVLVPELKVEIKAIPTGSGPNGSATGTGTSCTSVAEVSAPGPNLWMRRASRDTWGWGGMAPPPRINYEPTVKDKMVFKAITFMKPYANYSFEELRYASPVQTRVTELLNAKDMEDGTFSVQWTPSSVGAYCLAVTIDGIPLEEVYRVDVKEGILPPPTQRNSAQRRPQAPSKLRRFQARHSSGLRIRSHPTLQSEQVGVVRVGGVISFIDEIENDDGVWLRLSTESIRQHCTMGWYPTEAWCLQFNQHLARMLLQPVTDKEVNPVRKGVGAEEDVEEQPPVTPSASGEASPEPEPDPSPVLSPAKTKPGRFLSGHQSTNPFLYPAKHADLAEREAQVQEEREKEEEQVDDEDADDREPEQEALPAVELLPAHIGSAIAGVVGGGAIKLQALQKWFKGDAVDGPQPLTPSHSPPLAGVSVRELVRAMGGQDSPRGNGNRSQQEQDPEFSLASMRRPNYSASQTAALLSTPKHTPKRSAVVASETSGLEDELSLLQITTTTTGQGEQQSELQLATTSTASSASKRNPMGPIKRAMPPSFAESIRAVFAALLWHEGVVHDAMACASFLKFHPGLPKEGATVVTRRGESGDPRLQLSREQKAQQRHSVEVANAGNYLNIRPSTLETLTKSGNCSLHNRSKYRKNLLSGGGGAINSGDDTAQKLQALPEMVSVLPPALRCLVYLWEQICSGCVQIVQSNALEQREPRLLSPGSRDLNGDADTEGKEGKNSDQASAGEKDLGRKCKRKKKDDGSWCEICELFLPMPVTYHMRIAHPGCGKSAKGKGYNSVGIFCEGWAGNCGEGGKGASSWFLMCDPCRDRYLASCRSANNINSAARQLESSAAEGNELNLFGVKSTTLIANAEVYTTMRENATFLLELCSSSSSASGAAGSLAATSSSSKRSPQQMSVVAMPVVIEHQLGNSDLKPSTSRCSRMARLSGSKFCPGVGSGAFRKSFVGGPPTAPENVWLAPESFACLECLGTAGHEDLPYEMFGLGPNSNDNGYDRPLSEISYESCEPNNYDMLSGSLAPGTTAAASVGGGNLSKFHRSYSMGQGWASLAQHNHPPPHHPQQQHHQQQQMNLQLQQHQAPPVDGQPKVVYRRRNNSTSEGDGSLLICYPSEHLRRLVPQKLLASVSVMQTASGEGTGKDHATGTLGLDQSAGQNGGGNLLLTRPAMAFITQKHELDRLRAAMRRSLRIAACRIYALQALNWLLRSVTQGVCLHDLMWWFVSSLNPTGGHQPVERGEEASEPALEHPVAYTQISGRFAHLITQSLHVFLQSVADLTLHLPLGSPLQRVAIQCFGIRFRQADHQFLHSSHVFGNISKILSKSDEQNDAMAVSTILKPDCDVEHNQVHSVATGGSSGAGARLLCYTDLAGMFEVTVSSRPAMAESLTDNSTETFWESDEEDRNKCKIIELSLTKLNYACRYLLVHIDNSRDIQNKVLNVVFYAGQSLGDTNIIKSADVDPKACSWISAKICDDSCTHFRLELHGPENTLRVRQIKLLGLPIGGAVGSDDSSDHKHQPHLRLSHASRIQQQICEAETLRVFRLITGQVFGKLISNVSSDLVPPDSAGIGPPSGGAASTSLLADSLDLREHMVGILFSRSKLSHLQKQVIVHIVHAIRKEAQRAKEDWELANLAHVLKQSPQQQTAPALAASASCESTPERSRAPDTYCFEMLSMVLALSGSVVGRSYLSQQHGLLRDLLGLLHTGSDRVQRQVTALLRRILPEITPESFAELLGVQRLPPADYSIAHQSASDFDMSRLGLLDIFLAVIAKSLQLQVKVKTTVASTGPSGSGGVSGSSSGNGGAVLKAGQQEKTPAFVRLWSSLDLSVQQLRSRPPTGEPGTTDPFQFDALPPRKESKRNLNQRWFLNGVISTKQAESIISLIRDLASGKLSEKWSQITKAAIAESVLNLTRLEEIYRSPEHCTKTSTLWLALASLCVLERDHVEKLSSGQWSKLCDTRPLCSNHDDGETAAIIQCETCGSLCGDCDRFLHLNRKTRSHKRTVCKEEEEAIRVELHESCGRTKLFWLLALADSKTLKAMVEFRDGSHTIISGPQEAVGRCRFCGLTGNSGLLEIGNVCADAQCQEYAANSCLKTKPCGHACGGVTGERKCLPCLQHVCHTRENELAEELRDPKLTQDADDMCMICFVEALSCAPSIHLECGHVFHYHCCKAVLEKRWSGPRITFGFSLCPICKADIQHPLLSDILEPINGLKQDVKRKALMRIKYEGVVKDTDSKNVNMTQLAMDRYAYYVCFKCQKAYYGGEARCDAEIGEKFDPEELVCGGCSDVARAQMCPKHGTDFLEYKCRYCCSVAVFFCFGTTHFCDTCHDDFQRLTNIPKVKLPQCPAGPKAKQLLGDECPLHVMHPPTGEEFALGCGVCRNAQTF.

A disordered region spans residues 197-230; the sequence is VVGGPGLPAEKRPRRDSANSDADSDTEEPTEREP. Residues 205–214 are compositionally biased toward basic and acidic residues; the sequence is AEKRPRRDSA. A phosphoserine mark is found at S213 and S216. 3 RCC1 repeats span residues 615 to 666, 669 to 724, and 768 to 818; these read NGRV…ALLV, DGTV…FVTK, and KGQL…DKRL. Residues 680–700 are disordered; sequence RGEDGDSSKNRRQPKAVKPKK. Residues 689 to 700 are compositionally biased toward basic residues; it reads NRRQPKAVKPKK. A disordered region spans residues 900–950; that stretch reads TELKPPPSDVQQRQQRSKTLIMRRKERKGELETGAAGGGAATPTDLDKDPP. Residues 908-917 show a composition bias toward polar residues; it reads DVQQRQQRSK. RCC1 repeat units lie at residues 931–983, 984–1033, and 1035–1084; these read ETGA…VLTL, AGEV…LLTS, and GMVY…TVAP. Disordered regions lie at residues 1051–1109 and 1287–1327; these read LPSD…EMPP and AAAA…PPQL. Residues 1092-1103 are compositionally biased toward polar residues; that stretch reads RSQSPANVQPSG. Low complexity predominate over residues 1287 to 1302; that stretch reads AAAAAVAAPGTPVSAG. The interval 1436 to 1587 is PHR domain 1; that stretch reads NRFDNFGGGW…GQIPAILYRL (152 aa). The disordered stretch occupies residues 1681-1718; it reads SSTSVATGGGSNAAHGSGVVTTAKSVQSKPNKDKNTPR. A compositionally biased stretch (polar residues) spans 1699–1709; the sequence is VVTTAKSVQSK. Residues 2014-2169 are PHR domain 2; sequence ARFARCDVSR…GQLPCILYYS (156 aa). Disordered stretches follow at residues 2329–2353 and 2580–2604; these read SADL…VPIN and NGAG…NTHQ. A compositionally biased stretch (low complexity) spans 2336–2350; sequence QSQSVSQSQSQSQSV. The tract at residues 2885–4082 is required for interaction with Rae1; it reads AEVSAPGPNL…FVSSLNPTGG (1198 aa). The Filamin repeat unit spans residues 2906–3000; that stretch reads WGGMAPPPRI…LEEVYRVDVK (95 aa). Disordered regions lie at residues 3005-3024, 3117-3210, 3277-3333, 3348-3378, 3551-3587, and 3901-3936; these read PPPT…SKLR, KGVG…EPEQ, GGQD…ASET, TTTG…PMGP, PRLL…DLGR, and ASLA…APPV. Basic and acidic residues predominate over residues 3176 to 3191; the sequence is KHADLAEREAQVQEER. The segment covering 3192–3210 has biased composition (acidic residues); the sequence is EKEEEQVDDEDADDREPEQ. Residues 3282 to 3292 show a composition bias toward polar residues; it reads PRGNGNRSQQE. The span at 3348–3371 shows a compositional bias: low complexity; that stretch reads TTTGQGEQQSELQLATTSTASSAS. Residues 3917 to 3932 show a composition bias toward low complexity; sequence QHHQQQQMNLQLQQHQ. In terms of domain architecture, DOC spans 4195–4374; the sequence is HNQVHSVATG…KHQPHLRLSH (180 aa). Disordered regions lie at residues 4633 to 4655 and 4680 to 4702; these read ASTG…GAVL and LRSR…ALPP. Gly residues predominate over residues 4638-4652; that stretch reads SGSGGVSGSSSGNGG. 10 residues coordinate Zn(2+): C4991, C4994, C5009, H5011, H5014, C5017, C5038, C5041, C5101, and C5104. Residues 4991 to 5042 form an RING-type; atypical zinc finger; the sequence is CMICFVEALSCAPSIHLECGHVFHYHCCKAVLEKRWSGPRITFGFSLCPICK. Positions 5096 to 5231 are tandem cysteine domain; that stretch reads YAYYVCFKCQ…LGCGVCRNAQ (136 aa). C5115 is an active-site residue. Residues C5130, C5133, C5142, H5145, C5154, C5157, and C5158 each coordinate Zn(2+). The active site involves C5165. Residues C5172, C5175, C5193, C5207, H5213, C5224, and C5227 each contribute to the Zn(2+) site.

Belongs to the RING-Cys relay (RCR) family. As to quaternary structure, component of an E3 ubiquitin ligase complex composed of hiw, Rae1 and Fsn. Interacts with Rae1; the interaction with Rae1 may protect hiw from autophagy-mediated degradation. As to expression, express throughout the nervous system. Stage 13 embryos show expression in the central nervous system (CNS) at the longitudinal axon tracts around which the synaptic neuropil forms. Expression outside the CNS starts at stage 16 in presynaptic terminals at the periactive zone which surround the active zone. Expression at neuromuscular junctions (NMJ) and in the CNS is also seen in third instar larvae (at protein level).

Its subcellular location is the synapse. It localises to the cell projection. The protein resides in the axon. It carries out the reaction [E2 ubiquitin-conjugating enzyme]-S-ubiquitinyl-L-cysteine + [acceptor protein]-L-threonine = [E2 ubiquitin-conjugating enzyme]-L-cysteine + [acceptor protein]-3-O-ubiquitinyl-L-threonine.. It functions in the pathway protein modification; protein ubiquitination. In terms of biological role, atypical E3 ubiquitin-protein ligase which specifically mediates ubiquitination of threonine and serine residues on target proteins, instead of ubiquitinating lysine residues. Shows esterification activity towards both threonine and serine, with a preference for threonine, and acts via two essential catalytic cysteine residues that relay ubiquitin to its substrate via thioester intermediates. Required in the presynaptic motoneuron to down-regulate the levels of wnd and restrain synaptic terminal growth at the neuromuscular junction (NMJ) together with Rae1 and Fsn. This Drosophila melanogaster (Fruit fly) protein is E3 ubiquitin-protein ligase highwire.